The chain runs to 532 residues: Glucan synthesis regulatory protein (532 aa).

The segment at 374–532 is disordered; it reads TANKRKSMAP…DAEDMKDIEI (159 aa). Residues 381–393 are compositionally biased toward low complexity; sequence MAPSMASASGMRS. Residues 447–457 are compositionally biased toward polar residues; that stretch reads PTTSLTASNAS. A compositionally biased stretch (basic and acidic residues) spans 475–516; it reads SGEHSKEDIKVNEDSPAKERTSEDKEKKPETEANGKATESKG.

Belongs to the KNR4/SMI1 family.

Functionally, involved in the regulation of 1,3-beta-glucan synthase activity and cell-wall formation. The protein is Glucan synthesis regulatory protein (cot-2) of Neurospora crassa (strain ATCC 24698 / 74-OR23-1A / CBS 708.71 / DSM 1257 / FGSC 987).